We begin with the raw amino-acid sequence, 228 residues long: MSTWANLGLQDSASPLMEQLIFFHDHALLILVMITVLVGYLMFMLFFNNYVNRFLLHGQLIEMIWTILPAIILLFIALPSLRLLYLLDEINEPSVTLKSIGHQWYWSYEYSDFNNIEFDSYMIPTNELAIDGFRLLDVDNRVILPMNSQIRILVTAADVIHSWTVPALGVKVDGTPGRLNQTNFFINRPGLFYGQCSEICGANHSFMPIVIESVPVNNFIKWISSNNS.

The Mitochondrial intermembrane segment spans residues 1-26 (MSTWANLGLQDSASPLMEQLIFFHDH). Residues 27–48 (ALLILVMITVLVGYLMFMLFFN) traverse the membrane as a helical segment. Residues 49 to 62 (NYVNRFLLHGQLIE) are Mitochondrial matrix-facing. Residues 63-82 (MIWTILPAIILLFIALPSLR) form a helical membrane-spanning segment. Over 83-228 (LLYLLDEINE…FIKWISSNNS (146 aa)) the chain is Mitochondrial intermembrane. Positions 161, 196, 198, 200, 204, and 207 each coordinate Cu cation. Glu-198 contributes to the Mg(2+) binding site.

Belongs to the cytochrome c oxidase subunit 2 family. In terms of assembly, component of the cytochrome c oxidase (complex IV, CIV), a multisubunit enzyme composed of a catalytic core of 3 subunits and several supernumerary subunits. The complex exists as a monomer or a dimer and forms supercomplexes (SCs) in the inner mitochondrial membrane with ubiquinol-cytochrome c oxidoreductase (cytochrome b-c1 complex, complex III, CIII). The cofactor is Cu cation.

It is found in the mitochondrion inner membrane. The catalysed reaction is 4 Fe(II)-[cytochrome c] + O2 + 8 H(+)(in) = 4 Fe(III)-[cytochrome c] + 2 H2O + 4 H(+)(out). Component of the cytochrome c oxidase, the last enzyme in the mitochondrial electron transport chain which drives oxidative phosphorylation. The respiratory chain contains 3 multisubunit complexes succinate dehydrogenase (complex II, CII), ubiquinol-cytochrome c oxidoreductase (cytochrome b-c1 complex, complex III, CIII) and cytochrome c oxidase (complex IV, CIV), that cooperate to transfer electrons derived from NADH and succinate to molecular oxygen, creating an electrochemical gradient over the inner membrane that drives transmembrane transport and the ATP synthase. Cytochrome c oxidase is the component of the respiratory chain that catalyzes the reduction of oxygen to water. Electrons originating from reduced cytochrome c in the intermembrane space (IMS) are transferred via the dinuclear copper A center (CU(A)) of subunit 2 and heme A of subunit 1 to the active site in subunit 1, a binuclear center (BNC) formed by heme A3 and copper B (CU(B)). The BNC reduces molecular oxygen to 2 water molecules using 4 electrons from cytochrome c in the IMS and 4 protons from the mitochondrial matrix. This is Cytochrome c oxidase subunit 2 (mt:CoII) from Drosophila yakuba (Fruit fly).